The primary structure comprises 572 residues: DNA polymerase (572 aa).

Positions 1–222 (MPRKMFSCDF…LPMDKEIRRA (222 aa)) are 3'-5' exonuclease and strand displacement activities. Positions 56–66 (YFHNLKFDGAF) are interaction with the primer terminal protein. Positions 142 and 166 each coordinate Mg(2+). Positions 223 to 226 (YRGG) are DNA-binding; Involved in the formation of a stable complex between TP and phi29 DNA polymerase. The initiation, polymerization and pyrophosphorolytic activities stretch occupies residues 227–572 (FTWLNDKYKE…VLVDSVFTIK (346 aa)). Mg(2+) is bound by residues Asp-246 and Val-247. 5-methyl-UTP contacts are provided by Tyr-251, Lys-368, and Lys-380. Residues Asp-453 and Asp-455 each contribute to the Mg(2+) site. Asp-455 is a 5-methyl-UTP binding site.

This sequence belongs to the DNA polymerase type-B family. As to quaternary structure, interacts with the primer terminal protein; this interaction allows the initiation of TP-primed DNA replication at both viral DNA ends. Interacts with DNA. Mg(2+) serves as cofactor.

It catalyses the reaction DNA(n) + a 2'-deoxyribonucleoside 5'-triphosphate = DNA(n+1) + diphosphate. In terms of biological role, polymerase responsible for protein-primed viral DNA replication by strand displacement with high processivity and fidelity. To start replication, the DNA polymerase forms a heterodimer with a free primer terminal protein (TP), recognizes the replication origins at both 5' ends of the linear chromosome, and initiates replication using as primer the OH-group of Ser-232 of the TP. This polymerase possesses three enzymatic activities: DNA synthesis (polymerase), primer terminal protein (TP) deoxynucleotidylation, which is the formation of a covalent linkage (phosphoester) between the hydroxyl group of a specific serine residue in TP and 5'-dAMP, a reaction directed by the second T at the 3' end, and 3' to 5' exonuclease activity. Exonuclease activity has a proofreading purpose. This is DNA polymerase (2) from Bacillus phage B103 (Bacteriophage B103).